A 151-amino-acid chain; its full sequence is Large ribosomal subunit protein bL9 (151 aa).

Belongs to the bacterial ribosomal protein bL9 family.

Its function is as follows. Binds to the 23S rRNA. This chain is Large ribosomal subunit protein bL9, found in Pelodictyon phaeoclathratiforme (strain DSM 5477 / BU-1).